The sequence spans 198 residues: TM2 domain-containing protein 2 (198 aa).

An N-terminal signal peptide occupies residues 1–27 (MRWPVPPLGYLLLGGQGLLLTFSLISS). Over 28–128 (QNNTSPVTYP…FLRGNRPCIK (101 aa)) the chain is Extracellular. Asparagine 29, asparagine 40, and asparagine 76 each carry an N-linked (GlcNAc...) asparagine glycan. The helical transmembrane segment at 129–149 (YTGHYFITTLLYSFFLGCFGV) threads the bilayer. The region spanning 131 to 179 (GHYFITTLLYSFFLGCFGVDRFCLGHTGTAVGKLLTWGGLGIWWFVDLI) is the TM2 domain. Residues 150–166 (DRFCLGHTGTAVGKLLT) are Cytoplasmic-facing. A helical transmembrane segment spans residues 167–187 (WGGLGIWWFVDLILLITGGLM). The Extracellular segment spans residues 188–198 (PSDNSNWCTIY).

This sequence belongs to the TM2 family.

The protein localises to the membrane. This is TM2 domain-containing protein 2 (tm2d2) from Xenopus laevis (African clawed frog).